The following is a 148-amino-acid chain: UPF0179 protein Ta1159 (148 aa).

The protein belongs to the UPF0179 family.

This is UPF0179 protein Ta1159 from Thermoplasma acidophilum (strain ATCC 25905 / DSM 1728 / JCM 9062 / NBRC 15155 / AMRC-C165).